Consider the following 277-residue polypeptide: Energy-coupling factor transporter ATP-binding protein EcfA1 (277 aa).

The region spanning 5–240 (LEVENLVFKY…SEDMVEIGLD (236 aa)) is the ABC transporter domain. An ATP-binding site is contributed by 40–47 (GQNGSGKS).

It belongs to the ABC transporter superfamily. Energy-coupling factor EcfA family. In terms of assembly, forms a stable energy-coupling factor (ECF) transporter complex composed of 2 membrane-embedded substrate-binding proteins (S component), 2 ATP-binding proteins (A component) and 2 transmembrane proteins (T component).

It localises to the cell membrane. Its function is as follows. ATP-binding (A) component of a common energy-coupling factor (ECF) ABC-transporter complex. Unlike classic ABC transporters this ECF transporter provides the energy necessary to transport a number of different substrates. This chain is Energy-coupling factor transporter ATP-binding protein EcfA1, found in Lactococcus lactis subsp. lactis (strain IL1403) (Streptococcus lactis).